A 2367-amino-acid chain; its full sequence is Probable G-protein coupled receptor 179 (2367 aa).

The signal sequence occupies residues 1 to 25 (MGTRGAVMPPPMWGLLGCCFVCAWA). The Extracellular portion of the chain corresponds to 26 to 381 (LGGPRPIRSL…CLVEEAAVLR (356 aa)). The segment at 62–245 (YLYSGDAQQL…CQEGRLRPGW (184 aa)) is cache-like region. Asn-75 is a glycosylation site (N-linked (GlcNAc...) asparagine). Cys-76 and Cys-236 form a disulfide bridge. Asn-298 carries N-linked (GlcNAc...) asparagine glycosylation. Residues 382–402 (AAVLACQACCMLAIFLSMLVS) form a helical membrane-spanning segment. Residues 403-415 (YRCRRNKRIWASG) lie on the Cytoplasmic side of the membrane. A helical transmembrane segment spans residues 416-436 (VVLLETVLFGFLLLYFPVFIL). The Extracellular segment spans residues 437–444 (YFKPSVFR). Residues 445 to 465 (CIALRWVRLLGFAIVYGTIIL) form a helical membrane-spanning segment. A disulfide bond links Cys-445 and Cys-537. Over 466–493 (KLYRVLQLFLSRTAQRSALLSSGRLLRR) the chain is Cytoplasmic. The chain crosses the membrane as a helical span at residues 494 to 514 (LGLLLLPVLGFLAVWTVGALE). The Extracellular portion of the chain corresponds to 515–543 (RGIQHAPLVIRGHTPSGRHFYLCHHDRWD). Residues 544 to 564 (YIMVVAELLLLCWGSFLCYAT) traverse the membrane as a helical segment. The Cytoplasmic portion of the chain corresponds to 565 to 575 (RAVLSAFHEPR). Residues 576–594 (YMGIALHNELLLSAAFHTA) traverse the membrane as a helical segment. Topologically, residues 595-607 (RFVLVPSLHPDWT) are extracellular. Residues 608-628 (LLLFFFHTHSTVTTTLALIFI) form a helical membrane-spanning segment. The Cytoplasmic segment spans residues 629–2367 (PKFWKLGAPP…PPTVYPWDWE (1739 aa)). Disordered stretches follow at residues 731 to 818 (ARQH…FRSA), 869 to 932 (REER…PHPP), 1039 to 1083 (KSRA…QQGS), 1098 to 1198 (RSTY…AGKT), 1247 to 1431 (EVTE…CPWE), 1537 to 1557 (PRESTVPGHSSPCLDNSSSKA), 1577 to 1672 (DLRP…ERPQ), 1723 to 1757 (AIRKSPNDTGKVSADLGPRERAVTAPEKPQKPTPE), 1823 to 1852 (SEGTTGKGLDQKAGSESAEQREKALEKGRL), 1886 to 2108 (AQAP…GSVE), 2133 to 2212 (WEAG…KEAG), and 2308 to 2367 (GVRE…WDWE). The segment covering 738–759 (SGSPGHGSLPGSSRRRLLSSSL) has biased composition (low complexity). Positions 773 to 782 (STYDQRREQD) are enriched in basic and acidic residues. A compositionally biased stretch (basic and acidic residues) spans 1039-1067 (KSRAGENEMDAEDAHHQREANDVDEDRPK). Positions 1153–1164 (LQNQQNAHTSRM) are enriched in polar residues. Basic and acidic residues-rich tracts occupy residues 1171–1181 (EGSREQEDRGR), 1277–1299 (RALRQDPGDSQKKRGEARGKSEP), 1341–1362 (GRIRDKSEAGDSVEARKVEKPG), and 1390–1407 (EDGKPAQEAVKDLPQEKQ). Residues 1615–1639 (ESQKDKEKMPGKSEIEDVTAWEKPE) are compositionally biased toward basic and acidic residues. Composition is skewed to basic and acidic residues over residues 1840 to 1851 (AEQREKALEKGR), 1903 to 1920 (AEGHSLEATEKGDLRQDP), 1970 to 1979 (SHLDRQRPDQ), 2023 to 2054 (VTERIPVKGVSRQDGKGDSQEEKGRAPEKSEP), 2061 to 2070 (KKPEMADFRQ), and 2165 to 2180 (TEEHFSKAAAKPREQE). Residues 2326 to 2340 (PEPSLQEAESQSSSL) show a composition bias toward low complexity.

Belongs to the G-protein coupled receptor 3 family. As to quaternary structure, homodimer. Associates with the R7 group RGS-GNB5 complexes, composed of an R7 group RGS subunit (RGS6, RGS7, RGS9 or RGS11) and GNB5, promoting their localization to the cell membrane and regulating the GTPase activator activity of R7 RGS proteins. Interacts with TRPM1. Interacts with GRM6. Interacts with EGFLAM; transsynaptic interaction is required for synaptic organization of photoreceptor cells. In terms of tissue distribution, expressed in the retina.

It is found in the cell membrane. The protein resides in the postsynaptic cell membrane. Its subcellular location is the cell projection. The protein localises to the dendrite. Functionally, orphan receptor involved in vision. Required for signal transduction through retinal depolarizing bipolar cells. Acts as an atypical G-protein coupled receptor that recruits and regulates the R7 group RGS-GNB5 complexes instead of activating G proteins: promotes the GTPase activator activity of R7 RGS proteins, increasing the GTPase activity of G protein alpha subunits, thereby driving them into their inactive GDP-bound form. Associates with components of metabotropic signaling cascade in retina ON-bipolar neurons, such as TRPM1 and GRM6: may control the ability of the GRM6 cascade to gate TRPM1. The chain is Probable G-protein coupled receptor 179 from Homo sapiens (Human).